A 545-amino-acid polypeptide reads, in one-letter code: Cytochrome P450 monooxygenase sdnB (545 aa).

N-linked (GlcNAc...) asparagine glycosylation occurs at asparagine 5. Residues 30–50 (SILALTPLQGIALFLCLFWGY) form a helical membrane-spanning segment. Residue asparagine 276 is glycosylated (N-linked (GlcNAc...) asparagine). Residues 322–342 (LPILILIILVPAAHTTAMGIS) traverse the membrane as a helical segment. N-linked (GlcNAc...) asparagine glycosylation is found at asparagine 393 and asparagine 476. Cysteine 486 contributes to the heme binding site.

Belongs to the cytochrome P450 family. It depends on heme as a cofactor.

The protein localises to the membrane. Its pathway is antibiotic biosynthesis. Functionally, cytochrome P450 monooxygenase; part of the gene cluster that mediates the biosynthesis of sordarin and hypoxysordarin, glycoside antibiotics with a unique tetracyclic diterpene aglycone structure. First, the geranylgeranyl diphosphate synthase sdnC constructs GGDP from farnesyl diphosphate and isopentenyl diphosphate. The diterpene cyclase sdnA then catalyzes the cyclization of GGDP to afford cycloaraneosene. Cycloaraneosene is then hydroxylated four times by the putative cytochrome P450 monooxygenases sdnB, sdnE, sdnF and sdnH to give a hydroxylated cycloaraneosene derivative such as cycloaraneosene-8,9,13,19-tetraol. Although the order of the hydroxylations is unclear, at least C8, C9 and C13 of the cycloaraneosene skeleton are hydroxylated before the sordaricin formation. Dehydration of the 13-hydroxy group of the hydroxylated cycloaraneosene derivative might be catalyzed by an unassigned hypothetical protein such as sdnG and sdnP to construct the cyclopentadiene moiety. The FAD-dependent oxidoreductase sdnN is proposed to catalyze the oxidation at C9 of the hydroxylated cycloaraneosene derivative and also catalyze the Baeyer-Villiger oxidation to give the lactone intermediate. The presumed lactone intermediate would be hydrolyzed to give an acrolein moiety and a carboxylate moiety. Then, [4+2]cycloaddition would occur between the acrolein moiety and the cyclopentadiene moiety to give sordaricin. SdnN might also be involved in the [4+2]cycloaddition after the hypothesized oxidation to accommodate the oxidized product and prompt the [4+2]cycloaddition. GDP-6-deoxy-D-altrose may be biosynthesized from GDP-D-mannose by the putative GDP-mannose-4,6-dehydratase sdnI and the short-chain dehydrogenase sdnK. The glycosyltransferase sdnJ catalyzes the attachment of 6-deoxy-D-altrose onto the 19-hydroxy group of sordaricin to give 4'-O-demethylsordarin. The methyltransferase sdnD would complete the biosynthesis of sordarin. Sordarin can be further modified into hypoxysordarin. The unique acyl chain at the 3'-hydroxy group of hypoxysordarin would be constructed by an iterative type I PKS sdnO and the trans-acting polyketide methyltransferase sdnL. SdnL would be responsible for the introduction of an alpha-methyl group of the polyketide chain. Alternatively, the beta-lactamase-like protein sdnR might be responsible for the cleavage and transfer of the polyketide chain from the PKS sdnO to sordarin. Two putative cytochrome P450 monooxygenases, sdnQ and sdnT, might catalyze the epoxidations of the polyketide chain to complete the biosynthesis of hypoxysordarin. Transcriptional regulators sdnM and sdnS are presumably encoded for the transcriptional regulation of the expression of the sdn gene cluster. The protein is Cytochrome P450 monooxygenase sdnB of Sordaria araneosa (Pleurage araneosa).